The sequence spans 246 residues: Pyridoxine 5'-phosphate synthase (246 aa).

Position 12 (asparagine 12) interacts with 3-amino-2-oxopropyl phosphate. 14–15 contributes to the 1-deoxy-D-xylulose 5-phosphate binding site; that stretch reads DH. Arginine 23 contacts 3-amino-2-oxopropyl phosphate. Histidine 48 (proton acceptor) is an active-site residue. 2 residues coordinate 1-deoxy-D-xylulose 5-phosphate: arginine 50 and histidine 55. Catalysis depends on glutamate 75, which acts as the Proton acceptor. 1-deoxy-D-xylulose 5-phosphate is bound at residue threonine 105. Residue histidine 196 is the Proton donor of the active site. 3-amino-2-oxopropyl phosphate-binding positions include glycine 197 and 218–219; that span reads GH.

The protein belongs to the PNP synthase family. As to quaternary structure, homooctamer; tetramer of dimers.

The protein localises to the cytoplasm. It carries out the reaction 3-amino-2-oxopropyl phosphate + 1-deoxy-D-xylulose 5-phosphate = pyridoxine 5'-phosphate + phosphate + 2 H2O + H(+). It functions in the pathway cofactor biosynthesis; pyridoxine 5'-phosphate biosynthesis; pyridoxine 5'-phosphate from D-erythrose 4-phosphate: step 5/5. Catalyzes the complicated ring closure reaction between the two acyclic compounds 1-deoxy-D-xylulose-5-phosphate (DXP) and 3-amino-2-oxopropyl phosphate (1-amino-acetone-3-phosphate or AAP) to form pyridoxine 5'-phosphate (PNP) and inorganic phosphate. This is Pyridoxine 5'-phosphate synthase from Thioalkalivibrio sulfidiphilus (strain HL-EbGR7).